Consider the following 207-residue polypeptide: Small ribosomal subunit protein uS4 (207 aa).

In terms of domain architecture, S4 RNA-binding spans serine 97 to valine 165.

The protein belongs to the universal ribosomal protein uS4 family. Part of the 30S ribosomal subunit. Contacts protein S5. The interaction surface between S4 and S5 is involved in control of translational fidelity.

Its function is as follows. One of the primary rRNA binding proteins, it binds directly to 16S rRNA where it nucleates assembly of the body of the 30S subunit. With S5 and S12 plays an important role in translational accuracy. This is Small ribosomal subunit protein uS4 from Mycoplasmoides gallisepticum (strain R(low / passage 15 / clone 2)) (Mycoplasma gallisepticum).